A 634-amino-acid polypeptide reads, in one-letter code: Endoribonuclease rege-1 (634 aa).

Disordered regions lie at residues 1 to 33 (MDST…STPH), 90 to 113 (SHPS…APMI), and 156 to 223 (KMGL…NPDP). Residues 97 to 106 (ESSDPSKIDD) show a composition bias toward basic and acidic residues. Low complexity-rich tracts occupy residues 182–194 (SSAS…SSSS) and 201–217 (SVSI…STPS). The 153-residue stretch at 225 to 377 (LRAVVVDGSN…PSGRHGPRIE (153 aa)) folds into the RNase NYN domain. Asp314 is a Mg(2+) binding site. The C3H1-type zinc-finger motif lies at 387–412 (SSNPLVCPYARKCTYGNKCKFYHPER).

Belongs to the ZC3H12 family. Mg(2+) is required as a cofactor. In terms of tissue distribution, expressed in the intestinal cells adjacent to the pharynx.

It localises to the cytoplasm. Functionally, endonuclease which binds to the 3'UTR of target mRNAs and induces degradation of the transcript. Acts together with rle-1 to repress the expression of the transcription factor ets-4 by binding to the conserved ADE (alternate decay element) and RCE (REGE-1 cleavage element) stem loop structure in its 3'UTR, which controls the expression of genes in the IIS and TORC1 pathways, including those involved in lipid metabolism and autophagosome formation. May play a role in the clearance of apoptotic cell corpses. In Caenorhabditis elegans, this protein is Endoribonuclease rege-1.